The following is a 122-amino-acid chain: uncharacterized protein (122 aa).

A run of 4 helical transmembrane segments spans residues 7-27 (IVAI…IFCD), 29-49 (LVLA…LGWI), 62-82 (AITG…SKNP), and 89-109 (KEIF…YFGY).

Its subcellular location is the cell membrane. This is an uncharacterized protein from Methanocaldococcus jannaschii (strain ATCC 43067 / DSM 2661 / JAL-1 / JCM 10045 / NBRC 100440) (Methanococcus jannaschii).